The sequence spans 325 residues: Holliday junction branch migration complex subunit RuvB (325 aa).

Positions 1–180 (MKNQLLDAKV…FGIHLKLNFY (180 aa)) are large ATPase domain (RuvB-L). Residues leucine 19, arginine 20, glycine 61, lysine 64, threonine 65, threonine 66, 127–129 (EDF), arginine 170, tyrosine 180, and arginine 217 each bind ATP. Threonine 65 contacts Mg(2+). The small ATPAse domain (RuvB-S) stretch occupies residues 181 to 251 (SCEELTKIVE…ITDYALNQLG (71 aa)). Residues 254-325 (KLGLDSSDHK…ITANALKHLH (72 aa)) are head domain (RuvB-H). DNA contacts are provided by arginine 290, arginine 309, and arginine 314.

It belongs to the RuvB family. As to quaternary structure, homohexamer. Forms an RuvA(8)-RuvB(12)-Holliday junction (HJ) complex. HJ DNA is sandwiched between 2 RuvA tetramers; dsDNA enters through RuvA and exits via RuvB. An RuvB hexamer assembles on each DNA strand where it exits the tetramer. Each RuvB hexamer is contacted by two RuvA subunits (via domain III) on 2 adjacent RuvB subunits; this complex drives branch migration. In the full resolvosome a probable DNA-RuvA(4)-RuvB(12)-RuvC(2) complex forms which resolves the HJ.

It localises to the cytoplasm. The enzyme catalyses ATP + H2O = ADP + phosphate + H(+). In terms of biological role, the RuvA-RuvB-RuvC complex processes Holliday junction (HJ) DNA during genetic recombination and DNA repair, while the RuvA-RuvB complex plays an important role in the rescue of blocked DNA replication forks via replication fork reversal (RFR). RuvA specifically binds to HJ cruciform DNA, conferring on it an open structure. The RuvB hexamer acts as an ATP-dependent pump, pulling dsDNA into and through the RuvAB complex. RuvB forms 2 homohexamers on either side of HJ DNA bound by 1 or 2 RuvA tetramers; 4 subunits per hexamer contact DNA at a time. Coordinated motions by a converter formed by DNA-disengaged RuvB subunits stimulates ATP hydrolysis and nucleotide exchange. Immobilization of the converter enables RuvB to convert the ATP-contained energy into a lever motion, pulling 2 nucleotides of DNA out of the RuvA tetramer per ATP hydrolyzed, thus driving DNA branch migration. The RuvB motors rotate together with the DNA substrate, which together with the progressing nucleotide cycle form the mechanistic basis for DNA recombination by continuous HJ branch migration. Branch migration allows RuvC to scan DNA until it finds its consensus sequence, where it cleaves and resolves cruciform DNA. The protein is Holliday junction branch migration complex subunit RuvB of Orientia tsutsugamushi (strain Ikeda) (Rickettsia tsutsugamushi).